The following is a 533-amino-acid chain: Tyrosine ammonia-lyase (533 aa).

The active-site Proton donor/acceptor is tyrosine 57. A substrate-binding site is contributed by histidine 87. The 5-imidazolinone (Ala-Gly) cross-link spans 146-148 (ASG). At serine 147 the chain carries 2,3-didehydroalanine (Ser). The substrate site is built by asparagine 200 and arginine 305.

Belongs to the TAL/TAM family. In terms of assembly, homotetramer; dimer of dimers. Post-translationally, contains an active site 4-methylidene-imidazol-5-one (MIO), which is formed autocatalytically by cyclization and dehydration of residues Ala-Ser-Gly.

It catalyses the reaction L-tyrosine = (E)-4-coumarate + NH4(+). It carries out the reaction L-tyrosine = 3-amino-3-(4-hydroxyphenyl)propanoate. Functionally, has ammonia-lyase and, to a lesser extent, aminomutase activity. Catalyzes the rearrangement of L-tyrosine to R-beta-tyrosine and S-beta-tyrosine. Does not accept L-histidine or L-phenylalanine as substrates. The polypeptide is Tyrosine ammonia-lyase (Cupriavidus metallidurans (strain ATCC 43123 / DSM 2839 / NBRC 102507 / CH34) (Ralstonia metallidurans)).